A 399-amino-acid polypeptide reads, in one-letter code: Cytohesin-3 (399 aa).

Residues 14 to 61 (EDLSLEEREELLDIRRRKKELIDDIERLKYEIAEVMTEIDNLTSVEES) adopt a coiled-coil conformation. Residues 77 to 206 (FNMDPKKGIQ…IIMLNTSLHN (130 aa)) form the SEC7 domain. Residues 264 to 380 (NPDREGWLLK…WMKSIKASIS (117 aa)) form the PH domain. A 1,2-diacyl-sn-glycero-3-phospho-(1D-myo-inositol-3,4,5-trisphosphate) is bound by residues 273–280 (KLGGRVKT), Arg-284, Tyr-295, Arg-305, and Asn-354. Residues 391–399 (RKRRIANKK) are C-terminal autoinhibitory region.

As to quaternary structure, interacts with TAMALIN. Interacts with FRMD4A. Interacts with FRMD4B.

The protein localises to the cytoplasm. Its subcellular location is the cytosol. The protein resides in the cell membrane. It is found in the cell junction. It localises to the adherens junction. The protein localises to the tight junction. Functionally, promotes guanine-nucleotide exchange on ARF1. Promotes the activation of ARF factors through replacement of GDP with GTP. Plays a role in the epithelial polarization. In Mus musculus (Mouse), this protein is Cytohesin-3 (Cyth3).